The primary structure comprises 385 residues: Phosphotransferase FrzJ (385 aa).

Asn-38 and Lys-59 together coordinate ATP. The active site involves Asp-245.

It belongs to the methylthioribose kinase family. As to quaternary structure, monomer.

It catalyses the reaction (1S,3S,6S,7S,8S,9S)-6-[(4-methoxyphenyl)methyl]-3-(methylamino)-5-azatricyclo[6.3.1.0(1,5)]dodecane-7,9-diol + ATP = (-)-FR901483 + ADP + 2 H(+). Its pathway is secondary metabolite biosynthesis. Functionally, phosphotransferase; part of the gene cluster that mediates the biosynthesis of the alkaloid (-)-FR901483, a potent immunosuppressant that shows efficacy in animal models and a probable inhibitor of purine nucleotide biosynthesis by targeting phosphoribosylpyrophosphate amidotransferase (PPAT). FrzJ catalyzes the last step of the pathway by phosphorylating the C4'-OH of dephospho-(-)-FR901483 to produce (-)-FR901483. The biosynthesis of (-)-FR901483 starts with the condensation of two L-tyrosines to yield (S,S)-dityrosyl-piperazine. This process occurs in 3 steps with the non-canonical nonribosomal peptide synthetase FrzA catalyzing the reduction of L-tyrosine into L-tyrosinal, the spontaneous condensation of 2 L-tyrosinal units, and the subsequent reduction by the NmrA-like family domain-containing oxidoreductase FrzB. The cytochrome P450 monooxygenase FrzC then performs coupling between N10 and C1' to morph the piperazine into a 1,4-diazabicyclo[3.2.1]octane spiro-fused to a 2,5-cyclohexadienone. The dienone portion is further reduced to cyclohexanone by the flavin-dependent reductase FrzD. The methyltranserases (MTs) FrzE and FrzF are then involved in the methylation at the C10' amine and the C4 phenolic oxygen, respectively. The order of the two MTs appear to be interchangeable. Cleavage of the C9-N10' bond by the dioxygenase FrzG then leads to formation of a conjugated iminium. In addition to the oxidation of C9, an additional dehydrogenation between C7 and C8 can occur to give a likely shunt product. The next biosynthetic step is the intramolecular aldol condensation catalyzed by the newly identified aldolase FrzH to yield an aza-tricyclic product with the formation of a C9-C3' bond. The short-chain dehydrogenase/reductase FrzI then produces dephospho-(-)-FR901483 that is phosphorylated at C4'-OH into (-)-FR901483 by the phosphotransferase FrzJ. This Cladobotryum sp protein is Phosphotransferase FrzJ.